Here is a 120-residue protein sequence, read N- to C-terminus: Large ribosomal subunit protein uL18 (120 aa).

This sequence belongs to the universal ribosomal protein uL18 family. As to quaternary structure, part of the 50S ribosomal subunit; part of the 5S rRNA/L5/L18/L25 subcomplex. Contacts the 5S and 23S rRNAs.

This is one of the proteins that bind and probably mediate the attachment of the 5S RNA into the large ribosomal subunit, where it forms part of the central protuberance. The protein is Large ribosomal subunit protein uL18 of Synechococcus elongatus (strain ATCC 33912 / PCC 7942 / FACHB-805) (Anacystis nidulans R2).